The chain runs to 550 residues: Medium/long-chain-fatty-acid--CoA/3-oxocholest-4-en-26-oate--CoA ligase (550 aa).

ATP-binding positions include 178–186 (TGGTTGFPK), D419, R434, and K525. Positions 525–550 (KPDYRWAKEQTEARPADDVHAAHVSA) are disordered.

The protein belongs to the ATP-dependent AMP-binding enzyme family.

The enzyme catalyses a medium-chain fatty acid + ATP + CoA = a medium-chain fatty acyl-CoA + AMP + diphosphate. It carries out the reaction a long-chain fatty acid + ATP + CoA = a long-chain fatty acyl-CoA + AMP + diphosphate. It catalyses the reaction (25S)-3-oxocholest-4-en-26-oate + ATP + CoA = (25S)-3-oxocholest-4-en-26-oyl-CoA + AMP + diphosphate. The protein operates within lipid metabolism; fatty acid biosynthesis. Its pathway is steroid metabolism; cholesterol metabolism. Catalyzes the activation of medium/long-chain fatty acids as acyl-coenzyme A (acyl-CoA), which are then transferred to the multifunctional polyketide synthase (PKS) type III for further chain extension. Also involved in the degradation of cholesterol via the degradation of the side chains of C-24 branched-chain sterols. Catalyzes the ATP-dependent CoA thioesterification of the sterol 3-oxocholest-4-en-26-oate to yield 3-oxocholest-4-en-26-oyl-CoA. This chain is Medium/long-chain-fatty-acid--CoA/3-oxocholest-4-en-26-oate--CoA ligase, found in Mycobacterium marinum (strain ATCC BAA-535 / M).